The primary structure comprises 293 residues: MPELPEVETVRRGLEQKLNNFIIKKVEVCRDSTVAFPNKKEDFIGGLNNSLLYKWNRRGKYLIAELKKLGNENGRFPLEKFSKNNGFLIVHLRMTGYFKFINNSAQPCKHTRIRVFDNKNNELRYIDVRSFGQMWWIKEGLSPNKIIKGLGSLGPEPFSKDFDEIYLKKVISKRTKSIKAILLDQTIVAGIGNIYADESLYSAGISPFREARTIKKNELIKLKESIVTVLKNSIGSGGTTFSDFRDLEGENGNFGLQTNVYRRTGKECRKCGNLIERKKISGRSTHWCPKCQK.

Proline 2 (schiff-base intermediate with DNA) is an active-site residue. The active-site Proton donor is the glutamate 3. Lysine 60 acts as the Proton donor; for beta-elimination activity in catalysis. Histidine 110, arginine 129, and arginine 174 together coordinate DNA. An FPG-type zinc finger spans residues 259–293; that stretch reads NVYRRTGKECRKCGNLIERKKISGRSTHWCPKCQK. Catalysis depends on arginine 283, which acts as the Proton donor; for delta-elimination activity.

Belongs to the FPG family. Monomer. Zn(2+) serves as cofactor.

It catalyses the reaction Hydrolysis of DNA containing ring-opened 7-methylguanine residues, releasing 2,6-diamino-4-hydroxy-5-(N-methyl)formamidopyrimidine.. The catalysed reaction is 2'-deoxyribonucleotide-(2'-deoxyribose 5'-phosphate)-2'-deoxyribonucleotide-DNA = a 3'-end 2'-deoxyribonucleotide-(2,3-dehydro-2,3-deoxyribose 5'-phosphate)-DNA + a 5'-end 5'-phospho-2'-deoxyribonucleoside-DNA + H(+). In terms of biological role, involved in base excision repair of DNA damaged by oxidation or by mutagenic agents. Acts as a DNA glycosylase that recognizes and removes damaged bases. Has a preference for oxidized purines, such as 7,8-dihydro-8-oxoguanine (8-oxoG). Has AP (apurinic/apyrimidinic) lyase activity and introduces nicks in the DNA strand. Cleaves the DNA backbone by beta-delta elimination to generate a single-strand break at the site of the removed base with both 3'- and 5'-phosphates. The polypeptide is Formamidopyrimidine-DNA glycosylase (Prochlorococcus marinus (strain MIT 9215)).